A 1091-amino-acid chain; its full sequence is Rho GTPase-activating protein 7 (1091 aa).

Residues 11–78 (LTQIEAKEAC…LNKCAVMKLE (68 aa)) form the SAM domain. Phosphoserine is present on residues S86, S89, and S320. Positions 273 to 447 (QLNCVEISAL…RLSIYDNVPG (175 aa)) are focal adhesion-targeting (FAT). Disordered stretches follow at residues 292–327 (VRKRSVSNSTQTSSSSSQSETSSAVSTPSPVTRTRS), 382–439 (PKAL…SSRL), and 491–553 (SDEG…GVGA). 2 stretches are compositionally biased toward low complexity: residues 297–323 (VSNSTQTSSSSSQSETSSAVSTPSPVT) and 386–400 (SNGSFPPSGNNSSVN). Positions 414-425 (LRRENSSDSPKE) are enriched in basic and acidic residues. Positions 499–511 (ALDSVSPCPSSPK) are enriched in polar residues. Over residues 513–523 (IHLDVDNDRAT) the composition is skewed to basic and acidic residues. Over residues 526–535 (DLDSTGNSLN) the composition is skewed to polar residues. Positions 614 to 636 (KHGFSWAVPKFMKRIKVPDYKDR) are polybasic cluster (PBR). The region spanning 641–847 (VPLTVNVQRT…HMIAECKKLF (207 aa)) is the Rho-GAP domain. The region spanning 877–1084 (RNDESADYQH…RDSFSNQNTE (208 aa)) is the START domain.

As to quaternary structure, interacts with EF1A1, facilitates EF1A1 distribution to the membrane periphery and ruffles upon growth factor stimulation and suppresses cell migration. Interacts with tensin TNS1 (via N-terminus); the interaction is decreased by phosphorylation of TNS1. Interacts with TNS3 and PTEN; in resting cells, interacts with TNS3 (via C2 tensin-type domain) but, following growth factor stimulation, TNS3 and PTEN are phosphorylated which leads to weakened interaction with TNS3 and enhanced interaction with PTEN. Interacts (via C-terminus) with tensin TNS4 (via SH2 domain); the interaction is independent of tyrosine phosphorylation of DLC1.

Its subcellular location is the cytoplasm. It is found in the cell junction. The protein localises to the focal adhesion. It localises to the membrane. Its function is as follows. Functions as a GTPase-activating protein for the small GTPases RHOA, RHOB, RHOC and CDC42, terminating their downstream signaling. This induces morphological changes and detachment through cytoskeletal reorganization, playing a critical role in biological processes such as cell migration and proliferation. Also functions in vivo as an activator of the phospholipase PLCD1. Active DLC1 increases cell migration velocity but reduces directionality. Required for growth factor-induced epithelial cell migration; in resting cells, interacts with TNS3 while PTEN interacts with the p85 regulatory subunit of the PI3K kinase complex but growth factor stimulation induces phosphorylation of TNS3 and PTEN, causing them to change their binding preference so that PTEN interacts with DLC1 and TNS3 interacts with p85. The PTEN-DLC1 complex translocates to the posterior of migrating cells to activate RHOA while the TNS3-p85 complex translocates to the leading edge of migrating cells to promote RAC1 activation. The polypeptide is Rho GTPase-activating protein 7 (DLC1) (Canis lupus familiaris (Dog)).